The primary structure comprises 663 residues: Protein associated with UVRAG as autophagy enhancer (663 aa).

2 disordered regions span residues 1-36 and 65-136; these read MVSQ…LDTE and DASP…EERA. 2 stretches are compositionally biased toward polar residues: residues 80-93 and 105-130; these read TASN…TSPL and PKGT…SSVT. Positions 196-235 are interaction with UVRAG; sequence EAFVLPVDAEKENAHFYVADMIISVMEKMKCNILSQQHTE. K484, K534, K574, and K634 each carry N6-acetyllysine.

As to quaternary structure, interacts with UVRAG; the interaction is direct and promotes association with the PI3K/PI3KC3 and HOPS complexes. Interacts with STX17. Post-translationally, acetylated by KAT5/TIP60 under autophagy induction, promoting autophagosome maturation and lipid metabolism. Lys-484 and Lys-574 constitute the key sites for tuning function in autophagy.

Its subcellular location is the cytoplasmic vesicle. The protein localises to the autophagosome membrane. In terms of biological role, regulator of autophagy that promotes autophagosome maturation by facilitating the biogenesis of phosphatidylinositol 3-phosphate (PtdIns(3)P) in late steps of autophagy. Acts by antagonizing RUBCN, thereby stimulating phosphatidylinositol 3-kinase activity of the PI3K/PI3KC3 complex. Following anchorage to the autophagosomal SNARE STX17, promotes the recruitment of PI3K/PI3KC3 and HOPS complexes to the autophagosome to regulate the fusion specificity of autophagosomes with late endosomes/lysosomes. Binds phosphoinositides phosphatidylinositol 3-phosphate (PtdIns(3)P), 4-phosphate (PtdIns(4)P) and 5-phosphate (PtdIns(5)P). In addition to its role in autophagy, acts as a regulator of lipid and glycogen homeostasis. May act as a tumor suppressor. In Bos taurus (Bovine), this protein is Protein associated with UVRAG as autophagy enhancer.